The chain runs to 118 residues: Large ribosomal subunit protein bL20 (118 aa).

The protein belongs to the bacterial ribosomal protein bL20 family.

In terms of biological role, binds directly to 23S ribosomal RNA and is necessary for the in vitro assembly process of the 50S ribosomal subunit. It is not involved in the protein synthesizing functions of that subunit. The polypeptide is Large ribosomal subunit protein bL20 (Sulfurihydrogenibium sp. (strain YO3AOP1)).